Here is a 244-residue protein sequence, read N- to C-terminus: Glutathione S-transferase theta-2 (244 aa).

Positions 2-82 constitute a GST N-terminal domain; the sequence is GLELYLDLLS…YLSSKYQVAD (81 aa). Glutathione contacts are provided by residues 40-41, 53-54, 66-67, and 104-107; these read HM, KV, ES, and DNIR. Residues 88–230 enclose the GST C-terminal domain; it reads DLQARAQVHE…AKKMLPVPPP (143 aa).

This sequence belongs to the GST superfamily. Theta family. Homodimer. As to expression, in liver, highest expression found in central vein limiting plate hepatocytes. Also expressed in interlobular bile duct epithelial cells. In lung, expressed in club cells and ciliated cells of the bronchiolar epithelium and in type II alveolar cells of the lung parenchyma.

The protein localises to the cytoplasm. It localises to the cytosol. It is found in the nucleus. The catalysed reaction is RX + glutathione = an S-substituted glutathione + a halide anion + H(+). In terms of biological role, conjugation of reduced glutathione to a wide number of exogenous and endogenous hydrophobic electrophiles. This chain is Glutathione S-transferase theta-2, found in Mus musculus (Mouse).